A 256-amino-acid polypeptide reads, in one-letter code: Fructose-1,6-bisphosphatase/inositol-1-monophosphatase (256 aa).

The Mg(2+) site is built by Glu-65, Asp-79, Ile-81, and Asp-82. Residues 82–84, Arg-172, Ala-177, and Arg-196 contribute to the substrate site; that span reads DGT. Asp-201 serves as a coordination point for Mg(2+).

This sequence belongs to the inositol monophosphatase superfamily. FBPase class 4 family. In terms of assembly, homotetramer. Mg(2+) is required as a cofactor.

The enzyme catalyses beta-D-fructose 1,6-bisphosphate + H2O = beta-D-fructose 6-phosphate + phosphate. It catalyses the reaction a myo-inositol phosphate + H2O = myo-inositol + phosphate. Its activity is regulated as follows. In contrast to mammalian I-1-P phosphatases, is only weakly inhibited by Li(+), since 50% inhibitory concentration for Li(+) is about 100 mM, and the Li(+) concentration required to totally abolish I-1-Pase activity is 1 M. In terms of biological role, phosphatase with broad specificity; it can dephosphorylate fructose 1,6-bisphosphate, both D and L isomers of inositol-1-phosphate (I-1-P) but displaying a 20-fold higher rate of hydrolysis of D-I-1-P than of the L isomer, 2'-AMP, pNPP, inositol-2-phosphate, beta-glycerol phosphate, and alpha-D-glucose-1-phosphate. Cannot hydrolyze glucose-6-phosphate, fructose-6-phosphate, 5'-AMP and NAD(+). May be involved in the biosynthesis of a unique osmolyte, di-myo-inositol 1,1-phosphate. The polypeptide is Fructose-1,6-bisphosphatase/inositol-1-monophosphatase (suhB) (Thermotoga maritima (strain ATCC 43589 / DSM 3109 / JCM 10099 / NBRC 100826 / MSB8)).